The primary structure comprises 87 residues: Exodeoxyribonuclease 7 small subunit (87 aa).

Belongs to the XseB family. In terms of assembly, heterooligomer composed of large and small subunits.

It is found in the cytoplasm. The catalysed reaction is Exonucleolytic cleavage in either 5'- to 3'- or 3'- to 5'-direction to yield nucleoside 5'-phosphates.. Bidirectionally degrades single-stranded DNA into large acid-insoluble oligonucleotides, which are then degraded further into small acid-soluble oligonucleotides. This is Exodeoxyribonuclease 7 small subunit from Halorhodospira halophila (strain DSM 244 / SL1) (Ectothiorhodospira halophila (strain DSM 244 / SL1)).